Consider the following 625-residue polypeptide: MQNTAKKATLPATALAALGVVFGDIGTSPLYALKESFHAAHGLGIQPENVLGILSIIFWCLMLIISIKYVAIVMRADNNGEGGIMALLALNLRKAKIADNKKIYMIAIGFIGASLFFGDGIITPAISVLSAVEGLSIATDVFDPFIMPIAIAIIVTLFLVQKHGTAFVGKFFGPITLVWFLSLGILGIHSVIQTPVVLGMFSPHWAIQFIYHHPIMTFFVMGAVVLTVTGGEALYADMGHFGPVPIRLAWFFVVLPCLVLNYAGQGALLLRDPAAIENPFYLLVPQWALYPMIIMATMATVIASQAVISGVFSLARQAIQLGYLPRLSIKHTSESEEGQIYVPFLNWLLLIAIIILILIFKTSSNLASAYGLAVTLTMLCDTILVAVFIYSAWKWSLPKVLLLIIPFFILESVLVGATSLKILSGGWVPLLIGAIAVTILMTWKRGRELTFAKLEHDTLSLDLFVKSIGNSVHWVPGDAVFMTGTPNVVPHAMLHNIKHNKVLHQRNILVTVVIEDVPFVAPEERITTETLAEHFFRIKIFYGFKDEMNVPKALLQAYEQLGLEYDLMHISFFISRDRIVHSVGDGMSPWREKLFISMQRNTSPVSDFYQIPTNRVVELGSQIEI.

Helical transmembrane passes span 13-33 (TALAALGVVFGDIGTSPLYAL), 53-73 (ILSIIFWCLMLIISIKYVAIV), 103-123 (IYMIAIGFIGASLFFGDGIIT), 141-161 (VFDPFIMPIAIAIIVTLFLVQ), 172-192 (FGPITLVWFLSLGILGIHSVI), 206-226 (AIQFIYHHPIMTFFVMGAVVL), 250-270 (WFFVVLPCLVLNYAGQGALLL), 282-302 (LLVPQWALYPMIIMATMATVI), 340-360 (IYVPFLNWLLLIAIIILILIF), 369-389 (AYGLAVTLTMLCDTILVAVFI), 400-420 (VLLLIIPFFILESVLVGATSL), and 422-442 (ILSGGWVPLLIGAIAVTILMT).

Belongs to the HAK/KUP transporter (TC 2.A.72) family.

The protein resides in the cell inner membrane. The catalysed reaction is K(+)(in) + H(+)(in) = K(+)(out) + H(+)(out). Transport of potassium into the cell. Likely operates as a K(+):H(+) symporter. The chain is Probable potassium transport system protein Kup from Acinetobacter baumannii (strain AYE).